A 189-amino-acid polypeptide reads, in one-letter code: Large ribosomal subunit protein uL5 (189 aa).

It belongs to the universal ribosomal protein uL5 family. Part of the 50S ribosomal subunit; part of the 5S rRNA/L5/L18/L25 subcomplex. Contacts the 5S rRNA and the P site tRNA. Forms a bridge to the 30S subunit in the 70S ribosome.

Its function is as follows. This is one of the proteins that bind and probably mediate the attachment of the 5S RNA into the large ribosomal subunit, where it forms part of the central protuberance. In the 70S ribosome it contacts protein S13 of the 30S subunit (bridge B1b), connecting the 2 subunits; this bridge is implicated in subunit movement. Contacts the P site tRNA; the 5S rRNA and some of its associated proteins might help stabilize positioning of ribosome-bound tRNAs. The protein is Large ribosomal subunit protein uL5 of Salinispora tropica (strain ATCC BAA-916 / DSM 44818 / JCM 13857 / NBRC 105044 / CNB-440).